The following is a 94-amino-acid chain: UPF0337 protein NE2439 (94 aa).

The interval 74-94 (KNVGEAVSSRQKSVKKRSLYT) is disordered. The segment covering 85–94 (KSVKKRSLYT) has biased composition (basic residues).

Belongs to the UPF0337 (CsbD) family.

This is UPF0337 protein NE2439 from Nitrosomonas europaea (strain ATCC 19718 / CIP 103999 / KCTC 2705 / NBRC 14298).